We begin with the raw amino-acid sequence, 247 residues long: Probable dihydroorotate dehydrogenase B (NAD(+)), electron transfer subunit (247 aa).

Residues methionine 1–glycine 87 form the FAD-binding FR-type domain. The [2Fe-2S] cluster site is built by cysteine 201, cysteine 206, cysteine 209, and cysteine 217.

It belongs to the PyrK family. Heterotetramer of 2 PyrK and 2 PyrD type B subunits. Requires [2Fe-2S] cluster as cofactor. FAD serves as cofactor.

The protein operates within pyrimidine metabolism; UMP biosynthesis via de novo pathway; orotate from (S)-dihydroorotate (NAD(+) route): step 1/1. Responsible for channeling the electrons from the oxidation of dihydroorotate from the FMN redox center in the PyrD type B subunit to the ultimate electron acceptor NAD(+). In Pyrococcus furiosus (strain ATCC 43587 / DSM 3638 / JCM 8422 / Vc1), this protein is Probable dihydroorotate dehydrogenase B (NAD(+)), electron transfer subunit.